A 571-amino-acid chain; its full sequence is Proline--tRNA ligase (571 aa).

It belongs to the class-II aminoacyl-tRNA synthetase family. ProS type 1 subfamily. As to quaternary structure, homodimer.

The protein localises to the cytoplasm. The catalysed reaction is tRNA(Pro) + L-proline + ATP = L-prolyl-tRNA(Pro) + AMP + diphosphate. Catalyzes the attachment of proline to tRNA(Pro) in a two-step reaction: proline is first activated by ATP to form Pro-AMP and then transferred to the acceptor end of tRNA(Pro). As ProRS can inadvertently accommodate and process non-cognate amino acids such as alanine and cysteine, to avoid such errors it has two additional distinct editing activities against alanine. One activity is designated as 'pretransfer' editing and involves the tRNA(Pro)-independent hydrolysis of activated Ala-AMP. The other activity is designated 'posttransfer' editing and involves deacylation of mischarged Ala-tRNA(Pro). The misacylated Cys-tRNA(Pro) is not edited by ProRS. This chain is Proline--tRNA ligase, found in Shewanella sp. (strain W3-18-1).